Here is a 465-residue protein sequence, read N- to C-terminus: Botryococcus squalene synthase (465 aa).

NADP(+) contacts are provided by arginine 48 and arginine 73. Mg(2+)-binding residues include aspartate 76, glutamate 79, and aspartate 80. NADP(+) is bound by residues arginine 215, lysine 315, and arginine 317. Transmembrane regions (helical) follow at residues alanine 395–glycine 415 and isoleucine 429–leucine 449.

It belongs to the phytoene/squalene synthase family.

The protein resides in the membrane. It catalyses the reaction presqualene diphosphate + NADPH + H(+) = squalene + diphosphate + NADP(+). Produces squalene when coexpressed with SSL-1 and bisfarnesyl ether and a very small amount of squalene when incubated alone in the presence of NADPH. The protein is Botryococcus squalene synthase (SSL-2) of Botryococcus braunii (Green alga).